Reading from the N-terminus, the 209-residue chain is Thiamine-phosphate synthase (209 aa).

Residues 37–41 (QLREK) and N69 each bind 4-amino-2-methyl-5-(diphosphooxymethyl)pyrimidine. Residues D70 and D89 each coordinate Mg(2+). S108 provides a ligand contact to 4-amino-2-methyl-5-(diphosphooxymethyl)pyrimidine. 134 to 136 (TNT) contributes to the 2-[(2R,5Z)-2-carboxy-4-methylthiazol-5(2H)-ylidene]ethyl phosphate binding site. K137 contributes to the 4-amino-2-methyl-5-(diphosphooxymethyl)pyrimidine binding site. Residues G164 and 184–185 (VS) contribute to the 2-[(2R,5Z)-2-carboxy-4-methylthiazol-5(2H)-ylidene]ethyl phosphate site.

The protein belongs to the thiamine-phosphate synthase family. The cofactor is Mg(2+).

The catalysed reaction is 2-[(2R,5Z)-2-carboxy-4-methylthiazol-5(2H)-ylidene]ethyl phosphate + 4-amino-2-methyl-5-(diphosphooxymethyl)pyrimidine + 2 H(+) = thiamine phosphate + CO2 + diphosphate. The enzyme catalyses 2-(2-carboxy-4-methylthiazol-5-yl)ethyl phosphate + 4-amino-2-methyl-5-(diphosphooxymethyl)pyrimidine + 2 H(+) = thiamine phosphate + CO2 + diphosphate. It catalyses the reaction 4-methyl-5-(2-phosphooxyethyl)-thiazole + 4-amino-2-methyl-5-(diphosphooxymethyl)pyrimidine + H(+) = thiamine phosphate + diphosphate. Its pathway is cofactor biosynthesis; thiamine diphosphate biosynthesis; thiamine phosphate from 4-amino-2-methyl-5-diphosphomethylpyrimidine and 4-methyl-5-(2-phosphoethyl)-thiazole: step 1/1. In terms of biological role, condenses 4-methyl-5-(beta-hydroxyethyl)thiazole monophosphate (THZ-P) and 2-methyl-4-amino-5-hydroxymethyl pyrimidine pyrophosphate (HMP-PP) to form thiamine monophosphate (TMP). The polypeptide is Thiamine-phosphate synthase (Methanobrevibacter smithii (strain ATCC 35061 / DSM 861 / OCM 144 / PS)).